We begin with the raw amino-acid sequence, 341 residues long: MITPQEALTRCIEHREIFHDEMLHLMRQIMQGQISPVMAAAILTGLRVKKETIGEISAAAQVMREFANKVPVADRENFVDIVGTGGDGSHTFNISTASMFVAAAAGAKIAKHGNRGVSSKSGSADVLEALGVNIMLTPEQVGQCIEETGIGFMFAPTHHPAMKNVAPIRKEMGVRTIFNILGPLTNPADAPNILMGVFHPDLVGIQVRVMQRLGAKHAIVVYGKDGMDEVSLGAATLVGELKDGEVREYEIHPEDFGLQMISNRGLKVADATESKEMLLEALTNVPGTPREIVSLNAGTALYAANVADSVEDGIRRAREAIASGAAQEKLDQFVRATQQFK.

Residues Gly-83, 86 to 87 (GD), Thr-91, 93 to 96 (NIST), 111 to 119 (KHGNRGVSS), and Ser-123 contribute to the 5-phospho-alpha-D-ribose 1-diphosphate site. Gly-83 contacts anthranilate. A Mg(2+)-binding site is contributed by Ser-95. Asn-114 serves as a coordination point for anthranilate. Arg-169 contacts anthranilate. Mg(2+) is bound by residues Asp-228 and Glu-229.

It belongs to the anthranilate phosphoribosyltransferase family. As to quaternary structure, homodimer. Requires Mg(2+) as cofactor.

It carries out the reaction N-(5-phospho-beta-D-ribosyl)anthranilate + diphosphate = 5-phospho-alpha-D-ribose 1-diphosphate + anthranilate. It participates in amino-acid biosynthesis; L-tryptophan biosynthesis; L-tryptophan from chorismate: step 2/5. Catalyzes the transfer of the phosphoribosyl group of 5-phosphorylribose-1-pyrophosphate (PRPP) to anthranilate to yield N-(5'-phosphoribosyl)-anthranilate (PRA). This Cupriavidus necator (strain ATCC 17699 / DSM 428 / KCTC 22496 / NCIMB 10442 / H16 / Stanier 337) (Ralstonia eutropha) protein is Anthranilate phosphoribosyltransferase.